Consider the following 560-residue polypeptide: Serine palmitoyltransferase 2 (560 aa).

Residues P65–L85 traverse the membrane as a helical segment. The residue at position 377 (K377) is an N6-(pyridoxal phosphate)lysine.

It belongs to the class-II pyridoxal-phosphate-dependent aminotransferase family. In terms of assembly, component of the serine palmitoyltransferase (SPT) complex, which is composed of SPTLC1, SPTLC2 or SPTLC3 and SPTSSA or SPTSSB. The heterodimer consisting of SPTLC1 and SPTLC2/SPTLC3 forms the catalytic core of the enzyme, while SPTSSA or SPTSSB subunits determine substrate specificity. SPT also interacts with ORMDL proteins, especially ORMDL3, which negatively regulate SPT activity in the presence of ceramides. Forms dimers of heterodimers with SPTLC1. Pyridoxal 5'-phosphate is required as a cofactor. In terms of tissue distribution, expressed in a variety of tissues. Expressed in brains cortices (at protein level). Expressed in brown and white adipose tissues. Expressed in liver.

The protein resides in the endoplasmic reticulum membrane. The catalysed reaction is L-serine + hexadecanoyl-CoA + H(+) = 3-oxosphinganine + CO2 + CoA. The enzyme catalyses octadecanoyl-CoA + L-serine + H(+) = 3-oxoeicosasphinganine + CO2 + CoA. It functions in the pathway lipid metabolism; sphingolipid metabolism. SPT complex catalytic activity is negatively regulated by ORMDL proteins, including ORMDL3, in the presence of ceramides. This mechanism allows to maintain ceramide levels at sufficient concentrations for the production of complex sphingolipids, but which prevents the accumulation of ceramides to levels that trigger apoptosis. Its function is as follows. Component of the serine palmitoyltransferase multisubunit enzyme (SPT) that catalyzes the initial and rate-limiting step in sphingolipid biosynthesis by condensing L-serine and activated acyl-CoA (most commonly palmitoyl-CoA) to form long-chain bases. The SPT complex is composed of SPTLC1, SPTLC2 or SPTLC3 and SPTSSA or SPTSSB. Within this complex, the heterodimer consisting of SPTLC1 and SPTLC2/SPTLC3 forms the catalytic core. The composition of the serine palmitoyltransferase (SPT) complex determines the substrate preference. The SPTLC1-SPTLC2-SPTSSA complex shows a strong preference for C16-CoA substrate, while the SPTLC1-SPTLC3-SPTSSA isozyme uses both C14-CoA and C16-CoA as substrates, with a slight preference for C14-CoA. The SPTLC1-SPTLC2-SPTSSB complex shows a strong preference for C18-CoA substrate, while the SPTLC1-SPTLC3-SPTSSB isozyme displays an ability to use a broader range of acyl-CoAs, without apparent preference. Crucial for adipogenesis. The protein is Serine palmitoyltransferase 2 of Mus musculus (Mouse).